A 132-amino-acid polypeptide reads, in one-letter code: Ribosome-binding factor A (132 aa).

Residues 113–132 are disordered; the sequence is EANSTRAKDDDEADTPAKDD.

Belongs to the RbfA family. As to quaternary structure, monomer. Binds 30S ribosomal subunits, but not 50S ribosomal subunits or 70S ribosomes.

It localises to the cytoplasm. In terms of biological role, one of several proteins that assist in the late maturation steps of the functional core of the 30S ribosomal subunit. Associates with free 30S ribosomal subunits (but not with 30S subunits that are part of 70S ribosomes or polysomes). Required for efficient processing of 16S rRNA. May interact with the 5'-terminal helix region of 16S rRNA. This Burkholderia cenocepacia (strain HI2424) protein is Ribosome-binding factor A.